Consider the following 199-residue polypeptide: uncharacterized protein (199 aa).

The protein to U.parvum UU376.

This is an uncharacterized protein from Ureaplasma parvum serovar 3 (strain ATCC 700970).